The sequence spans 33 residues: Photosystem II reaction center protein Psb30 (33 aa).

The helical transmembrane segment at 5–25 (ILAQLTALAFIVVSGPLVIAL) threads the bilayer.

It belongs to the Psb30/Ycf12 family. PSII is composed of 1 copy each of membrane proteins PsbA, PsbB, PsbC, PsbD, PsbE, PsbF, PsbH, PsbI, PsbJ, PsbK, PsbL, PsbM, PsbT, PsbX, PsbY, PsbZ, Psb30/Ycf12, peripheral proteins of the oxygen-evolving complex and a large number of cofactors. It forms dimeric complexes.

The protein localises to the plastid. Its subcellular location is the chloroplast thylakoid membrane. Functionally, a core subunit of photosystem II (PSII), probably helps stabilize the reaction center. In Chaetosphaeridium globosum (Charophycean green alga), this protein is Photosystem II reaction center protein Psb30.